Consider the following 239-residue polypeptide: Succinate dehydrogenase [ubiquinone] iron-sulfur subunit (239 aa).

In terms of domain architecture, 2Fe-2S ferredoxin-type spans Phe-11–Met-100. Cys-61, Cys-66, Cys-69, and Cys-81 together coordinate [2Fe-2S] cluster. Residues Asp-141–Tyr-171 enclose the 4Fe-4S ferredoxin-type domain. Residues Cys-151, Cys-154, and Cys-157 each coordinate [4Fe-4S] cluster. Cys-161 serves as a coordination point for [3Fe-4S] cluster. Position 166 (Trp-166) interacts with a ubiquinone. Residues Cys-208 and Cys-214 each coordinate [3Fe-4S] cluster. Cys-218 lines the [4Fe-4S] cluster pocket.

It belongs to the succinate dehydrogenase/fumarate reductase iron-sulfur protein family. In terms of assembly, component of complex II composed of four subunits: a flavoprotein (FP), an iron-sulfur protein (IP), and a cytochrome b composed of a large and a small subunit. [2Fe-2S] cluster is required as a cofactor. It depends on [3Fe-4S] cluster as a cofactor. Requires [4Fe-4S] cluster as cofactor.

The protein localises to the mitochondrion inner membrane. It catalyses the reaction a quinone + succinate = fumarate + a quinol. It participates in carbohydrate metabolism; tricarboxylic acid cycle; fumarate from succinate (eukaryal route): step 1/1. Iron-sulfur protein (IP) subunit of succinate dehydrogenase (SDH) that is involved in complex II of the mitochondrial electron transport chain and is responsible for transferring electrons from succinate to ubiquinone (coenzyme Q). The protein is Succinate dehydrogenase [ubiquinone] iron-sulfur subunit (SDH2) of Reclinomonas americana.